Here is a 258-residue protein sequence, read N- to C-terminus: uncharacterized protein (258 aa).

One can recognise a Cyclin N-terminal domain in the interval 16–148 (EAFDSFEYAE…VLRALNFDTH (133 aa)).

The protein belongs to the cyclin family. Cyclin L subfamily.

It localises to the cytoplasm. The protein resides in the nucleus. This is an uncharacterized protein from Schizosaccharomyces pombe (strain 972 / ATCC 24843) (Fission yeast).